Consider the following 430-residue polypeptide: Ribulose bisphosphate carboxylase (430 aa).

Lysine 160 functions as the Proton acceptor in the catalytic mechanism. Lysine 162 lines the substrate pocket. The Mg(2+) site is built by lysine 186, aspartate 188, and glutamate 189. An N6-carboxylysine modification is found at lysine 186. The active-site Proton acceptor is the histidine 278. Residues arginine 279, histidine 311, 348–350, and 370–373 each bind substrate; these read SGG and QAGG.

Belongs to the RuBisCO large chain family. Type III subfamily. As to quaternary structure, homodimer or homodecamer. In contrast to form I RuBisCO, the form III RuBisCO is composed solely of large subunits. The cofactor is Mg(2+).

The catalysed reaction is 2 (2R)-3-phosphoglycerate + 2 H(+) = D-ribulose 1,5-bisphosphate + CO2 + H2O. It carries out the reaction D-ribulose 1,5-bisphosphate + O2 = 2-phosphoglycolate + (2R)-3-phosphoglycerate + 2 H(+). Functionally, catalyzes the addition of molecular CO(2) and H(2)O to ribulose 1,5-bisphosphate (RuBP), generating two molecules of 3-phosphoglycerate (3-PGA). Functions in an archaeal AMP degradation pathway, together with AMP phosphorylase and R15P isomerase. The chain is Ribulose bisphosphate carboxylase from Pyrococcus horikoshii (strain ATCC 700860 / DSM 12428 / JCM 9974 / NBRC 100139 / OT-3).